Reading from the N-terminus, the 555-residue chain is Beta-caryophyllene synthase (555 aa).

Asp313, Asp317, Asp456, and Glu464 together coordinate Mg(2+). A DDXXD motif motif is present at residues 313 to 317 (DDIYD).

This sequence belongs to the terpene synthase family. Requires Mg(2+) as cofactor.

It catalyses the reaction (2E,6E)-farnesyl diphosphate = (+)-(E)-beta-caryophyllene + diphosphate. The protein operates within secondary metabolite biosynthesis; terpenoid biosynthesis. In terms of biological role, sesquiterpene synthase converting farnesyl diphosphate to beta-caryophyllene as the major product. This is Beta-caryophyllene synthase from Phyla dulcis (Aztec sweet herb).